Reading from the N-terminus, the 298-residue chain is MAVFLWRNLFQTTKARMLQQRRASLYNGAHDYDEELIKKKLQQFAGGSINLSKEHSGIGILTLNNSRLMNAFTGTMMLELQERVTELENWKDGKGLIICGAGNTFCSGSDLNAVKAISNSQDGMNMCMFMQNTLTRLMRLPLISIALIQGKALGGGAELTTACDFRLMTPGSEIRFVHKHMGLVPGWGGAARLVRIIGSRAALQLLSRAHGVDPERALHLGLSEGTLSSSDETGSLEEARAWLSQYTEGPASVIQAVKKVVTAGRELPLEAALRTEKDVFGTVWGGPANLEALTRRQK.

The protein belongs to the enoyl-CoA hydratase/isomerase family.

It localises to the cytoplasm. It is found in the cytosol. It carries out the reaction (2S)-ethylmalonyl-CoA + H(+) = butanoyl-CoA + CO2. It catalyses the reaction (S)-methylmalonyl-CoA + H(+) = propanoyl-CoA + CO2. The enzyme catalyses (2R)-ethylmalonyl-CoA + H(+) = butanoyl-CoA + CO2. In terms of biological role, decarboxylates ethylmalonyl-CoA, a potentially toxic metabolite, to form butyryl-CoA, suggesting it might be involved in metabolite proofreading. Acts preferentially on (S)-ethylmalonyl-CoA but also has some activity on the (R)-isomer. Also has methylmalonyl-CoA decarboxylase activity at lower level. This is Ethylmalonyl-CoA decarboxylase (ECHDC1) from Gallus gallus (Chicken).